Consider the following 287-residue polypeptide: Beta-lactamase GES-2 (287 aa).

An N-terminal signal peptide occupies residues 1–18 (MRFIHALLLAGIAHSAYA). The cysteines at positions 63 and 233 are disulfide-linked. Serine 64 functions as the Nucleophile; acyl-ester intermediate in the catalytic mechanism. A beta-lactam-binding residues include lysine 67, serine 125, and glutamate 161.

This sequence belongs to the class-A beta-lactamase family.

It carries out the reaction a beta-lactam + H2O = a substituted beta-amino acid. Inhibited by the beta-lactamase-blocking agents clavulanic acid, sulbactam and tazobactam. Functionally, extended-spectrum beta-lactamase (ESBL) which confers resistance to penicillins, as well as first, third and fourth-generation cephalosporins. Has modest carbapenem-hydrolyzing activity. Has cefotaxime-hydrolyzing activity. This chain is Beta-lactamase GES-2, found in Pseudomonas aeruginosa.